The sequence spans 368 residues: MALVTNVCEYEELAKHKLPKMVYDFYAVDAEDQWTLRENSEAFSRILFQPVVLVDVSCIDMSMSVLGYNISMPIMIAPTALHKLAHPEGELATARAAAAAETIMTLSSWSSCSIEEVNLAGPGVRFFQLSIYKDRNLVQQLIQRAEKAGYKAIVLTVDAPWLGRREADVKNRFTLPQNVMLKIFEGLDQGKIDETNGSGLAAYVASQIDRSFSWKDIKWLQTVTSLPVLVKGIITAQDTRIAIEYGAAGIIMSNHGGRQLDYLPATISCLEEVVREANGRVPVFIDSGFRRGTDVFKALALGASGVFIGRPVLFSLAIDGEAGVRNALRMLRDELEITMALSGCTSVKEITRGHVVTESDRIRRCSRL.

Positions 1-360 (MALVTNVCEY…TRGHVVTESD (360 aa)) constitute an FMN hydroxy acid dehydrogenase domain. FMN-binding positions include 78-80 (PTA), serine 107, 128-130 (QLS), and threonine 156. A glyoxylate-binding site is contributed by arginine 165. Residues lysine 231 and serine 253 each contribute to the FMN site. The glyoxylate site is built by histidine 255 and arginine 258. Histidine 255 (proton acceptor) is an active-site residue. Residues 286 to 290 (DSGFR) and 309 to 310 (GR) contribute to the FMN site. Residues 366-368 (SRL) carry the Microbody targeting signal motif.

Belongs to the FMN-dependent alpha-hydroxy acid dehydrogenase family. As to quaternary structure, homotetramer. FMN is required as a cofactor.

It is found in the peroxisome. It catalyses the reaction glycolate + O2 = glyoxylate + H2O2. Its pathway is photosynthesis; photorespiration; glycine from 2-phosphoglycolate: step 2/3. Functionally, catalyzes the oxidation of glycolate to glyoxylate, with a reduction of O2 to H2O2. Is a key enzyme in photorespiration in green plants. This is Glycolate oxidase 2 (GLO2) from Oryza sativa subsp. indica (Rice).